A 106-amino-acid chain; its full sequence is NADH-quinone oxidoreductase subunit K (106 aa).

Helical transmembrane passes span 10–30 (VTYILGLAGILFSIGVLGVLI), 34–54 (IVIIFMSVELILNSVNLVFVT), and 67–87 (IVFFVMAIAAAEAAVGLALVI).

The protein belongs to the complex I subunit 4L family. In terms of assembly, NDH-1 is composed of 14 different subunits. Subunits NuoA, H, J, K, L, M, N constitute the membrane sector of the complex.

The protein resides in the cell inner membrane. The catalysed reaction is a quinone + NADH + 5 H(+)(in) = a quinol + NAD(+) + 4 H(+)(out). Its function is as follows. NDH-1 shuttles electrons from NADH, via FMN and iron-sulfur (Fe-S) centers, to quinones in the respiratory chain. The immediate electron acceptor for the enzyme in this species is believed to be ubiquinone. Couples the redox reaction to proton translocation (for every two electrons transferred, four hydrogen ions are translocated across the cytoplasmic membrane), and thus conserves the redox energy in a proton gradient. This is NADH-quinone oxidoreductase subunit K from Leptospira biflexa serovar Patoc (strain Patoc 1 / Ames).